The chain runs to 236 residues: Exosome complex component Rrp4 (236 aa).

An S1 motif domain is found at 64–133 (GDKVIGKIIE…EIKESWLTLK (70 aa)). In terms of domain architecture, KH spans 141 to 199 (EGGHMVLIHASRVPRVIGKGGGMVNMVKELTSTRIIIGQNGLIWIDGPIEGVTMAIAAI).

This sequence belongs to the RRP4 family. In terms of assembly, component of the archaeal exosome complex. Forms a trimer of Rrp4 and/or Csl4 subunits. The trimer associates with a hexameric ring-like arrangement composed of 3 Rrp41-Rrp42 heterodimers.

It localises to the cytoplasm. Non-catalytic component of the exosome, which is a complex involved in RNA degradation. Increases the RNA binding and the efficiency of RNA degradation. Confers strong poly(A) specificity to the exosome. This Thermoplasma volcanium (strain ATCC 51530 / DSM 4299 / JCM 9571 / NBRC 15438 / GSS1) protein is Exosome complex component Rrp4.